A 433-amino-acid polypeptide reads, in one-letter code: ATP-dependent protease ATPase subunit HslU (433 aa).

Residues Val18, 60–65 (GVGKTE), Asp246, Glu311, and Arg383 each bind ATP.

This sequence belongs to the ClpX chaperone family. HslU subfamily. A double ring-shaped homohexamer of HslV is capped on each side by a ring-shaped HslU homohexamer. The assembly of the HslU/HslV complex is dependent on binding of ATP.

Its subcellular location is the cytoplasm. ATPase subunit of a proteasome-like degradation complex; this subunit has chaperone activity. The binding of ATP and its subsequent hydrolysis by HslU are essential for unfolding of protein substrates subsequently hydrolyzed by HslV. HslU recognizes the N-terminal part of its protein substrates and unfolds these before they are guided to HslV for hydrolysis. This Rhodopseudomonas palustris (strain HaA2) protein is ATP-dependent protease ATPase subunit HslU.